Reading from the N-terminus, the 499-residue chain is Probable cytosol aminopeptidase (499 aa).

Positions 263 and 268 each coordinate Mn(2+). Lysine 275 is an active-site residue. Residues aspartate 286, aspartate 345, and glutamate 347 each contribute to the Mn(2+) site. Arginine 349 is a catalytic residue.

Belongs to the peptidase M17 family. The cofactor is Mn(2+).

The protein localises to the cytoplasm. It carries out the reaction Release of an N-terminal amino acid, Xaa-|-Yaa-, in which Xaa is preferably Leu, but may be other amino acids including Pro although not Arg or Lys, and Yaa may be Pro. Amino acid amides and methyl esters are also readily hydrolyzed, but rates on arylamides are exceedingly low.. The catalysed reaction is Release of an N-terminal amino acid, preferentially leucine, but not glutamic or aspartic acids.. Presumably involved in the processing and regular turnover of intracellular proteins. Catalyzes the removal of unsubstituted N-terminal amino acids from various peptides. This chain is Probable cytosol aminopeptidase, found in Bradyrhizobium sp. (strain BTAi1 / ATCC BAA-1182).